Consider the following 402-residue polypeptide: 1-deoxy-D-xylulose 5-phosphate reductoisomerase (402 aa).

The NADPH site is built by Thr10, Gly11, Ser12, Ile13, Gly36, Arg37, Asn38, and Asn124. Lys125 provides a ligand contact to 1-deoxy-D-xylulose 5-phosphate. Glu126 is an NADPH binding site. Residue Asp150 coordinates Mn(2+). 4 residues coordinate 1-deoxy-D-xylulose 5-phosphate: Ser151, Glu152, Ser186, and His209. Glu152 contacts Mn(2+). Residue Gly215 participates in NADPH binding. 1-deoxy-D-xylulose 5-phosphate contacts are provided by Ser222, Asn227, Lys228, and Glu231. Glu231 is a Mn(2+) binding site.

The protein belongs to the DXR family. The cofactor is Mg(2+). Mn(2+) is required as a cofactor.

The catalysed reaction is 2-C-methyl-D-erythritol 4-phosphate + NADP(+) = 1-deoxy-D-xylulose 5-phosphate + NADPH + H(+). The protein operates within isoprenoid biosynthesis; isopentenyl diphosphate biosynthesis via DXP pathway; isopentenyl diphosphate from 1-deoxy-D-xylulose 5-phosphate: step 1/6. Its activity is regulated as follows. Inhibited by fosmidomycin. Its function is as follows. Catalyzes the NADPH-dependent rearrangement and reduction of 1-deoxy-D-xylulose-5-phosphate (DXP) to 2-C-methyl-D-erythritol 4-phosphate (MEP). In Synechococcus sp. (strain ATCC 27144 / PCC 6301 / SAUG 1402/1) (Anacystis nidulans), this protein is 1-deoxy-D-xylulose 5-phosphate reductoisomerase.